We begin with the raw amino-acid sequence, 1212 residues long: Solute carrier family 12 member 2 (1212 aa).

An N-acetylmethionine modification is found at methionine 1. Residues 1 to 286 (MEPRPTAPSS…AESKGVVKFG (286 aa)) are Cytoplasmic-facing. 3 disordered regions span residues 36–81 (GTAV…QSRF), 112–138 (GAKQ…AKGR), and 150–193 (SSAE…GGGS). Residues serine 77 and serine 79 each carry the phosphoserine modification. Residues 80 to 83 (RFQV) carry the RFXV motif 1 motif. The segment covering 127-137 (EPAKGSEEAKG) has biased composition (basic and acidic residues). The RFXV motif 2 signature appears at 138–141 (RFRV). Positions 150–160 (SSAEDSLSDAA) are enriched in low complexity. Phosphothreonine; by OXSR1 and STK39 occurs at positions 203, 207, and 212. Residues threonine 217 and threonine 230 each carry the phosphothreonine modification. Position 242 is a phosphoserine (serine 242). Residue threonine 266 is modified to Phosphothreonine. A discontinuously helical transmembrane segment spans residues 287–316 (WIKGVLVRCMLNIWGVMLFIRLSWIVGQAG). Position 297 (leucine 297) interacts with Na(+). K(+) contacts are provided by asparagine 298 and isoleucine 299. Residue tryptophan 300 participates in Na(+) binding. Chloride contacts are provided by glycine 301, valine 302, and methionine 303. Residues 317–336 (IGLSVLVIMMATVVTTITGL) form a helical membrane-spanning segment. The Cytoplasmic portion of the chain corresponds to 337–367 (STSAIATNGFVRGGGAYYLISRSLGPEFGGA). A helical transmembrane segment spans residues 368–395 (IGLIFAFANAVAVAMYVVGFAETVVELL). Phenylalanine 372 serves as a coordination point for chloride. Tyrosine 383 is a binding site for K(+). Topologically, residues 396–405 (KEHSILMIDE) are extracellular. Residues 406 to 429 (INDIRIIGAITVVILLGISVAGME) traverse the membrane as a helical segment. The Cytoplasmic segment spans residues 430 to 432 (WEA). A helical transmembrane segment spans residues 433–454 (KAQIVLLVILLLAIGDFVIGTF). The Extracellular segment spans residues 455–486 (IPLESKKPKGFFGYKSEIFNENFGPDFREEET). Residues 487–504 (FFSVFAIFFPAATGILAG) form a discontinuously helical membrane-spanning segment. K(+) contacts are provided by proline 496, alanine 497, and threonine 499. Proline 496 and alanine 497 together coordinate chloride. Chloride contacts are provided by glycine 500 and isoleucine 501. The Cytoplasmic segment spans residues 505–519 (ANISGDLADPQSAIP). Residues 520–541 (KGTLLAILITTLVYVGIAVSVG) form a helical membrane-spanning segment. Residues 542-598 (SCVVRDATGNVNDTIVTELTNCTSAACKLNFDFSSCESSPCSYGLMNNFQVMSMVSG) lie on the Extracellular side of the membrane. 2 N-linked (GlcNAc...) asparagine glycosylation sites follow: asparagine 553 and asparagine 562. Intrachain disulfides connect cysteine 563-cysteine 568 and cysteine 577-cysteine 582. A helical transmembrane segment spans residues 599-623 (FTPLISAGIFSATLSSALASLVSAP). Positions 610, 613, and 614 each coordinate Na(+). Over 624–651 (KIFQALCKDNIYPAFQMFAKGYGKNNEP) the chain is Cytoplasmic. The next 2 membrane-spanning stretches (helical) occupy residues 652–672 (LRGY…AELN) and 673–691 (VIAP…LINF). Chloride-binding residues include phenylalanine 682 and tyrosine 686. Over 692–714 (SVFHASLAKSPGWRPAFKYYNMW) the chain is Cytoplasmic. Helical transmembrane passes span 715–732 (ISLL…VINW) and 733–745 (WAAL…VLGL). The Cytoplasmic segment spans residues 746–1212 (YIYVTYKKPD…NHQSVLTFYS (467 aa)). The interval 761-778 (STQALTYLNALQHSIRLS) is scissor helix. Serine 940 and serine 944 each carry phosphoserine. Positions 962-978 (LDTSKPLSEKPITHKVE) are enriched in basic and acidic residues. A disordered region spans residues 962-989 (LDTSKPLSEKPITHKVEEEDGKTATQPL). Serine 994 carries the phosphoserine modification.

It belongs to the SLC12A transporter family. In terms of assembly, homodimer; adopts a domain-swap conformation at the scissor helices connecting the transmembrane domain and C-terminal domain. In terms of processing, phosphorylated at Thr-203, Thr-207 and Thr-212 by OXSR1/OSR1 and STK39/SPAK downstream of WNK kinases (WNK1, WNK2, WNK3 or WNK4), promoting its activity. Expressed in many tissues.

It is found in the basolateral cell membrane. The catalysed reaction is K(+)(out) + 2 chloride(out) + Na(+)(out) = K(+)(in) + 2 chloride(in) + Na(+)(in). Its activity is regulated as follows. Activated following phosphorylation by OXSR1/OSR1 and STK39/SPAK downstream of WNK kinases (WNK1, WNK2, WNK3 or WNK4). Inhibited by bumetanide. Inhibited by furosemide. Functionally, cation-chloride cotransporter which mediates the electroneutral transport of chloride, potassium and/or sodium ions across the membrane. Plays a vital role in the regulation of ionic balance and cell volume. The chain is Solute carrier family 12 member 2 (SLC12A2) from Homo sapiens (Human).